The sequence spans 449 residues: Chromosomal replication initiator protein DnaA (449 aa).

The segment at 1–72 is domain I, interacts with DnaA modulators; it reads MENIHDLWER…SETIDDLTGV (72 aa). The tract at residues 72–111 is domain II; that stretch reads VRLYPKFVIPTSQLDEPFVEQELKKPMKQPPAQNGEMPNN. The domain III, AAA+ region stretch occupies residues 112–328; the sequence is MLNDKYTFDT…GALIRVVAYS (217 aa). ATP-binding residues include Gly156, Gly158, Lys159, and Thr160. Residues 329-449 form a domain IV, binds dsDNA region; the sequence is SLINQDMNAD…IQDISDKLRS (121 aa).

Belongs to the DnaA family. Oligomerizes as a right-handed, spiral filament on DNA at oriC.

It is found in the cytoplasm. Plays an essential role in the initiation and regulation of chromosomal replication. ATP-DnaA binds to the origin of replication (oriC) to initiate formation of the DNA replication initiation complex once per cell cycle. Binds the DnaA box (a 9 base pair repeat at the origin) and separates the double-stranded (ds)DNA. Forms a right-handed helical filament on oriC DNA; dsDNA binds to the exterior of the filament while single-stranded (ss)DNA is stabiized in the filament's interior. The ATP-DnaA-oriC complex binds and stabilizes one strand of the AT-rich DNA unwinding element (DUE), permitting loading of DNA polymerase. After initiation quickly degrades to an ADP-DnaA complex that is not apt for DNA replication. Binds acidic phospholipids. The sequence is that of Chromosomal replication initiator protein DnaA from Halalkalibacterium halodurans (strain ATCC BAA-125 / DSM 18197 / FERM 7344 / JCM 9153 / C-125) (Bacillus halodurans).